The primary structure comprises 281 residues: MKSLTLKAPAKVNYRLDVLRRRPDGYHDLRMIMQRIDLCDEITITLSDTSGVRVTCGREGVPDGPENIAWRAANALLALSGLETGIDIAITKNIPVAAGLGGGSSDAATVLLGVNELLGLGLSIERLMEVGVTLGADVPFFVFGKTALAEGIGEVLTAIDAVPPLWLVIVNPNIPVSTAWVYQSLRLTGEWNGDTIPRFFKDVADVCAVLANDLELVTIERYPVIGEIKERLVAAGAAGALMSGSGPTVFGLFASEEEARGAAQSITNSSDWFVVAVRALV.

Residue lysine 11 is part of the active site. 95-105 (PVAAGLGGGSS) contributes to the ATP binding site. Residue aspartate 137 is part of the active site.

The protein belongs to the GHMP kinase family. IspE subfamily.

It carries out the reaction 4-CDP-2-C-methyl-D-erythritol + ATP = 4-CDP-2-C-methyl-D-erythritol 2-phosphate + ADP + H(+). Its pathway is isoprenoid biosynthesis; isopentenyl diphosphate biosynthesis via DXP pathway; isopentenyl diphosphate from 1-deoxy-D-xylulose 5-phosphate: step 3/6. Its function is as follows. Catalyzes the phosphorylation of the position 2 hydroxy group of 4-diphosphocytidyl-2C-methyl-D-erythritol. The sequence is that of 4-diphosphocytidyl-2-C-methyl-D-erythritol kinase from Geobacter metallireducens (strain ATCC 53774 / DSM 7210 / GS-15).